The chain runs to 404 residues: Ubiquitin-like modifier-activating enzyme 5 (404 aa).

Phosphoserine is present on Ser-45. Residues Gly-83, Asp-104, Lys-127, Asn-150, and Asn-184 each contribute to the ATP site. Residues Cys-226 and Cys-229 each contribute to the Zn(2+) site. Residue Cys-250 is the Glycyl thioester intermediate of the active site. Zn(2+)-binding residues include Cys-303 and Cys-308. A UFM1-interacting sequence (UIS) motif is present at residues 334-346 (IIHEDNEWGIELV). Residues 347-377 (SEISEEELKKSSGPIPDLPEGIIVAYTVPQK) are linker. Ser-358 and Ser-393 each carry phosphoserine. The UFC1-binding sequence (UFC) signature appears at 389–404 (DSGESLEDLMAKMKNI).

The protein belongs to the ubiquitin-activating E1 family. UBA5 subfamily. As to quaternary structure, homodimer; homodimerization is required for UFM1 activation. Interacts (via UIS motif) with UFM1; binds UFM1 via a trans-binding mechanism in which UFM1 interacts with distinct sites in both subunits of the UBA5 homodimer. Interacts (via C-terminus) with UFC1. Interacts (via UIS motif) with GABARAPL2 and, with lower affinity, with GABARAP and GABARAPL1.

The protein resides in the cytoplasm. It is found in the nucleus. Its subcellular location is the endoplasmic reticulum membrane. It localises to the golgi apparatus. Functionally, E1-like enzyme which specifically catalyzes the first step in ufmylation. Activates UFM1 by first adenylating its C-terminal glycine residue with ATP, and thereafter linking this residue to the side chain of a cysteine residue in E1, yielding a UFM1-E1 thioester and free AMP. Activates UFM1 via a trans-binding mechanism, in which UFM1 interacts with distinct sites in both subunits of the UBA5 homodimer. Trans-binding also promotes stabilization of the UBA5 homodimer, and enhances ATP-binding. Transfer of UFM1 from UBA5 to the E2-like enzyme UFC1 also takes place using a trans mechanism. Ufmylation plays a key role in various processes, such as ribosome recycling, response to DNA damage, interferon response or reticulophagy (also called ER-phagy). Ufmylation is essential for erythroid differentiation of both megakaryocytes and erythrocytes. The chain is Ubiquitin-like modifier-activating enzyme 5 from Bos taurus (Bovine).